The primary structure comprises 382 residues: Na(+)/H(+) antiporter NhaA (382 aa).

11 helical membrane-spanning segments follow: residues 14–34 (AGGI…NSSL), 49–69 (MSVS…LIGL), 87–107 (IFPA…YVAF), 117–137 (GWAI…ALLG), 146–166 (VFLL…IAFF), 171–191 (LSVL…LLNA), 205–225 (FILW…GVVL), 252–272 (VAFA…LEGV), 285–305 (VALG…YLAV), 321–341 (IFAV…ISSL), and 356–376 (LGIL…LSIS).

It belongs to the NhaA Na(+)/H(+) (TC 2.A.33) antiporter family.

The protein localises to the cell inner membrane. The enzyme catalyses Na(+)(in) + 2 H(+)(out) = Na(+)(out) + 2 H(+)(in). Na(+)/H(+) antiporter that extrudes sodium in exchange for external protons. The chain is Na(+)/H(+) antiporter NhaA from Aliivibrio fischeri (strain ATCC 700601 / ES114) (Vibrio fischeri).